The sequence spans 249 residues: DNA repair protein RecO (249 aa).

This sequence belongs to the RecO family.

Involved in DNA repair and RecF pathway recombination. In Afipia carboxidovorans (strain ATCC 49405 / DSM 1227 / KCTC 32145 / OM5) (Oligotropha carboxidovorans), this protein is DNA repair protein RecO.